Here is a 738-residue protein sequence, read N- to C-terminus: Eukaryotic translation initiation factor 3 subunit B (738 aa).

A sufficient for interaction with HCR1 and TIF32 region spans residues M1 to M120. Residues M1 to F245 form a sufficient for interaction with PIC8 region. The RRM domain occupies N59–D146. WD repeat units follow at residues P211–K250, Q322–K360, V363–R406, and V537–R579.

It belongs to the eIF-3 subunit B family. Component of the eukaryotic translation initiation factor 3 (eIF-3) complex.

Its subcellular location is the cytoplasm. RNA-binding component of the eukaryotic translation initiation factor 3 (eIF-3) complex, which is involved in protein synthesis of a specialized repertoire of mRNAs and, together with other initiation factors, stimulates binding of mRNA and methionyl-tRNAi to the 40S ribosome. The eIF-3 complex specifically targets and initiates translation of a subset of mRNAs involved in cell proliferation. In Meyerozyma guilliermondii (strain ATCC 6260 / CBS 566 / DSM 6381 / JCM 1539 / NBRC 10279 / NRRL Y-324) (Yeast), this protein is Eukaryotic translation initiation factor 3 subunit B.